We begin with the raw amino-acid sequence, 211 residues long: Arginine exporter protein ArgO (211 aa).

6 consecutive transmembrane segments (helical) span residues 1–21, 37–57, 68–88, 111–131, 147–167, and 179–199; these read MISY…PLGP, LMIA…GIFG, LLAL…FGAL, IIAT…DTFV, WFAL…ALLA, and AQRI…FQLA.

It belongs to the LysE/ArgO transporter (TC 2.A.75) family.

Its subcellular location is the cell inner membrane. It catalyses the reaction L-arginine(in) = L-arginine(out). Involved in the export of arginine. Important to control the intracellular level of arginine and the correct balance between arginine and lysine. This is Arginine exporter protein ArgO from Salmonella paratyphi A (strain ATCC 9150 / SARB42).